A 301-amino-acid polypeptide reads, in one-letter code: Glycine--tRNA ligase alpha subunit (301 aa).

It belongs to the class-II aminoacyl-tRNA synthetase family. Tetramer of two alpha and two beta subunits.

The protein localises to the cytoplasm. It catalyses the reaction tRNA(Gly) + glycine + ATP = glycyl-tRNA(Gly) + AMP + diphosphate. This chain is Glycine--tRNA ligase alpha subunit, found in Glaesserella parasuis serovar 5 (strain SH0165) (Haemophilus parasuis).